The sequence spans 135 residues: Large ribosomal subunit protein eL32 (135 aa).

This sequence belongs to the eukaryotic ribosomal protein eL32 family.

This Methanococcus maripaludis (strain C6 / ATCC BAA-1332) protein is Large ribosomal subunit protein eL32.